The chain runs to 196 residues: tRNA(Phe) 7-((3-amino-3-carboxypropyl)-4-demethylwyosine(37)-N(4))-methyltransferase 1 (196 aa).

It belongs to the TYW3 family.

The enzyme catalyses 4-demethyl-7-[(3S)-3-amino-3-carboxypropyl]wyosine(37) in tRNA(Phe) + S-adenosyl-L-methionine = 7-[(3S)-3-amino-3-carboxypropyl]wyosine(37) in tRNA(Phe) + S-adenosyl-L-homocysteine + H(+). Functionally, S-adenosyl-L-methionine-dependent methyltransferase that acts as a component of the wyosine derivatives biosynthesis pathway. Probably methylates N-4 position of wybutosine-86 to produce wybutosine-72. The sequence is that of tRNA(Phe) 7-((3-amino-3-carboxypropyl)-4-demethylwyosine(37)-N(4))-methyltransferase 1 from Pyrococcus horikoshii (strain ATCC 700860 / DSM 12428 / JCM 9974 / NBRC 100139 / OT-3).